Reading from the N-terminus, the 135-residue chain is uncharacterized protein (135 aa).

The region spanning 8 to 123 (PKGIIVLKTL…IFIYVAINKT (116 aa)) is the HotDog ACOT-type domain.

It belongs to the acyl coenzyme A hydrolase family.

This is an uncharacterized protein from Buchnera aphidicola subsp. Acyrthosiphon pisum (strain APS) (Acyrthosiphon pisum symbiotic bacterium).